The primary structure comprises 469 residues: 3-isopropylmalate dehydratase large subunit (469 aa).

3 residues coordinate [4Fe-4S] cluster: Cys349, Cys410, and Cys413.

Belongs to the aconitase/IPM isomerase family. LeuC type 1 subfamily. Heterodimer of LeuC and LeuD. [4Fe-4S] cluster is required as a cofactor.

It carries out the reaction (2R,3S)-3-isopropylmalate = (2S)-2-isopropylmalate. It participates in amino-acid biosynthesis; L-leucine biosynthesis; L-leucine from 3-methyl-2-oxobutanoate: step 2/4. Functionally, catalyzes the isomerization between 2-isopropylmalate and 3-isopropylmalate, via the formation of 2-isopropylmaleate. In Neisseria gonorrhoeae (strain NCCP11945), this protein is 3-isopropylmalate dehydratase large subunit.